We begin with the raw amino-acid sequence, 428 residues long: Protein CANDIDATE G-PROTEIN COUPLED RECEPTOR 6 (428 aa).

The signal sequence occupies residues 1-22 (MTILPFLAAVFVLQLLSTLTVA). Residues Asn-31, Asn-89, and Asn-157 are each glycosylated (N-linked (GlcNAc...) asparagine). Transmembrane regions (helical) follow at residues 173–193 (LYLVFFLCYLSFLCFWLCFCW), 202–222 (IHLLMTALLLVKSLTLICAAV), 238–258 (IVFYIFQFISVVLLFMVIVLI), 276–296 (LLVIVVPLQVLANIASIVIGE), 310–330 (IFFLADITCCCAIVFAMVWSM), 356–376 (FYVLVIGYLFFTRIVVVVMKM), and 385–405 (VSNAAEEIATLSFYCLMFYMF).

This sequence belongs to the LU7TM family.

It localises to the membrane. Its function is as follows. G-protein coupled receptor. Plays a role in plants and microbes interactions. The protein is Protein CANDIDATE G-PROTEIN COUPLED RECEPTOR 6 of Arabidopsis thaliana (Mouse-ear cress).